A 315-amino-acid polypeptide reads, in one-letter code: NADH-ubiquinone oxidoreductase chain 1 (315 aa).

8 helical membrane passes run 6–26 (FILS…SVAF), 80–100 (ISPI…PFFV), 107–127 (LGGL…MIAG), 153–173 (LALI…MYFF), 177–197 (IYIW…TISL), 229–249 (LIFM…CVIF), 253–273 (DVFN…FIWA), and 292–312 (CFLS…ILLF).

This sequence belongs to the complex I subunit 1 family.

It is found in the mitochondrion inner membrane. It carries out the reaction a ubiquinone + NADH + 5 H(+)(in) = a ubiquinol + NAD(+) + 4 H(+)(out). Its function is as follows. Core subunit of the mitochondrial membrane respiratory chain NADH dehydrogenase (Complex I) that is believed to belong to the minimal assembly required for catalysis. Complex I functions in the transfer of electrons from NADH to the respiratory chain. The immediate electron acceptor for the enzyme is believed to be ubiquinone. The polypeptide is NADH-ubiquinone oxidoreductase chain 1 (mt:ND1) (Drosophila persimilis (Fruit fly)).